The following is a 148-amino-acid chain: Large ribosomal subunit protein bL9 (148 aa).

The protein belongs to the bacterial ribosomal protein bL9 family.

Functionally, binds to the 23S rRNA. In Syntrophobacter fumaroxidans (strain DSM 10017 / MPOB), this protein is Large ribosomal subunit protein bL9.